We begin with the raw amino-acid sequence, 292 residues long: General transcription factor IIE subunit 2 (292 aa).

Position 1 is an N-acetylmethionine (Met-1). Residues 17–64 (LSTPVVEKRAVPSESPSSSSSKKKKAKVEHGGSSGSKQNSDHNNGSFN) are disordered. Residues 51 to 63 (GSKQNSDHNNGSF) are compositionally biased toward polar residues. A Phosphoserine modification is found at Ser-62. Positions 67 to 147 (ALSGSSGYKF…YAFKPKYNLK (81 aa)) form a DNA-binding region, TFIIE beta. Lys-75 carries the post-translational modification N6-acetyllysine. The interval 245–277 (SMQESGPKKVASIQRRKKPASQKKRRFKTHNEH) is disordered. A compositionally biased stretch (basic residues) spans 258–272 (QRRKKPASQKKRRFK).

The protein belongs to the TFIIE beta subunit family. In terms of assembly, tetramer of two alpha and two beta chains. Interacts with FACT subunit SUPT16H. Interacts with ATF7IP. Interacts with SND1. Part of TBP-based Pol II pre-initiation complex (PIC), in which Pol II core assembles with general transcription factors and other specific initiation factors including GTF2E1, GTF2E2, GTF2F1, GTF2F2, TCEA1, ERCC2, ERCC3, GTF2H2, GTF2H3, GTF2H4, GTF2H5, GTF2A1, GTF2A2, GTF2B and TBP; this large multi-subunit PIC complex mediates DNA unwinding and targets Pol II core to the transcription start site where the first phosphodiester bond forms.

Its subcellular location is the nucleus. In terms of biological role, recruits TFIIH to the initiation complex and stimulates the RNA polymerase II C-terminal domain kinase and DNA-dependent ATPase activities of TFIIH. Both TFIIH and TFIIE are required for promoter clearance by RNA polymerase. In Mus musculus (Mouse), this protein is General transcription factor IIE subunit 2 (Gtf2e2).